Reading from the N-terminus, the 384-residue chain is Zinc transporter 7 (384 aa).

The signal sequence occupies residues 1-25 (MERFVQFLRRGNGLMAASLAAGSCA). Over 26 to 46 (EEVAKAEGAGCRDDAAALRLK) the chain is Extracellular. A helical transmembrane segment spans residues 47-67 (GVAMATILVAGVVGVGLPLAG). Over 68–79 (RKRRALRTDSAA) the chain is Cytoplasmic. The helical transmembrane segment at 80–100 (FVAAKAFAAGVILATGFVHML) threads the bilayer. At 101 to 119 (HDAEHALSSPCLPAHPWRS) the chain is on the extracellular side. Residues 120–140 (FPFPGFVAMSAALATLVLDFL) form a helical membrane-spanning segment. Over 141 to 227 (ATRFYEGKHR…GEGEVPAQVR (87 aa)) the chain is Cytoplasmic. A disordered region spans residues 185-222 (DNKAPLLQPHSHSHSHPHGHGHGHELAQPEGSGGEGEV). Residues 195–205 (SHSHSHPHGHG) show a composition bias toward basic residues. Residues 228 to 248 (SVVVSQILEMGIVSHSVIIGL) form a helical membrane-spanning segment. At 249-261 (SLGVSRSPCTIRP) the chain is on the extracellular side. A helical membrane pass occupies residues 262 to 282 (LVAALSFHQFFEGFALGGCIA). Residues 283–291 (QAQFKTLSA) lie on the Cytoplasmic side of the membrane. A helical membrane pass occupies residues 292–312 (AIMACFFAITTPAGIAAGAGV). The Extracellular portion of the chain corresponds to 313–323 (ASFYNANSPRA). Residues 324 to 344 (LVVEGILDSVSAGILIYMSLV) traverse the membrane as a helical segment. Topologically, residues 345 to 363 (DLIAADFLGGKMTGSTRQQ) are cytoplasmic. A helical transmembrane segment spans residues 364–384 (VMAYIALFLGALSMSSLAIWA).

It belongs to the ZIP transporter (TC 2.A.5) family.

Its subcellular location is the cell membrane. Zinc transporter that may be involved in zinc uptake from the rhizosphere. This chain is Zinc transporter 7 (ZIP7), found in Oryza sativa subsp. japonica (Rice).